A 196-amino-acid polypeptide reads, in one-letter code: Charged multivesicular body protein 1a (196 aa).

Position 1 is an N-acetylmethionine (Met1). Positions 5-47 (LFQLKFTAKQLEKLAKKAEKDSKAEQAKVKKALLQKNVECARV) form a coiled coil. The residue at position 101 (Ser101) is a Phosphoserine. Residues 102–124 (TMDLQKVSSVMDRFEQQVQNLDV) adopt a coiled-coil conformation. Ser173 carries the phosphoserine modification. The interval 173–196 (SAVGESSVRSQEDQLSRRLAALRN) is disordered. Positions 185–195 (DQLSRRLAALR) match the MIT-interacting motif motif.

This sequence belongs to the SNF7 family. Probable peripherally associated component of the endosomal sorting required for transport complex III (ESCRT-III). ESCRT-III components are thought to multimerize to form a flat lattice on the perimeter membrane of the endosome. Several assembly forms of ESCRT-III may exist that interact and act sequentially. Self-associates. Interacts with CHMP1B. Interacts with VPS4A. Interacts with VPS4B. Interacts with PHF1. Interacts with IST1. Interacts with MITD1. In terms of tissue distribution, expressed in placenta, cultured skin fibroblasts and in osteoblast cell line MG-63.

It localises to the cytoplasm. It is found in the endosome membrane. The protein resides in the nucleus matrix. Probable peripherally associated component of the endosomal sorting required for transport complex III (ESCRT-III) which is involved in multivesicular bodies (MVBs) formation and sorting of endosomal cargo proteins into MVBs. MVBs contain intraluminal vesicles (ILVs) that are generated by invagination and scission from the limiting membrane of the endosome and mostly are delivered to lysosomes enabling degradation of membrane proteins, such as stimulated growth factor receptors, lysosomal enzymes and lipids. The MVB pathway appears to require the sequential function of ESCRT-O, -I,-II and -III complexes. ESCRT-III proteins mostly dissociate from the invaginating membrane before the ILV is released. The ESCRT machinery also functions in topologically equivalent membrane fission events, such as the terminal stages of cytokinesis and the budding of enveloped viruses (HIV-1 and other lentiviruses). ESCRT-III proteins are believed to mediate the necessary vesicle extrusion and/or membrane fission activities, possibly in conjunction with the AAA ATPase VPS4. Involved in cytokinesis. Involved in recruiting VPS4A and/or VPS4B to the midbody of dividing cells. May also be involved in chromosome condensation. Targets the Polycomb group (PcG) protein BMI1/PCGF4 to regions of condensed chromatin. May play a role in stable cell cycle progression and in PcG gene silencing. In Homo sapiens (Human), this protein is Charged multivesicular body protein 1a (CHMP1A).